A 257-amino-acid chain; its full sequence is Trans-aconitate 2-methyltransferase (257 aa).

It belongs to the methyltransferase superfamily. Tam family.

The protein localises to the cytoplasm. The enzyme catalyses trans-aconitate + S-adenosyl-L-methionine = (E)-3-(methoxycarbonyl)pent-2-enedioate + S-adenosyl-L-homocysteine. Catalyzes the S-adenosylmethionine monomethyl esterification of trans-aconitate. The protein is Trans-aconitate 2-methyltransferase of Sinorhizobium medicae (strain WSM419) (Ensifer medicae).